We begin with the raw amino-acid sequence, 600 residues long: Probable tripeptidyl-peptidase SED4 (600 aa).

The first 22 residues, 1–22 (MVSFTLRAIGACLIGLPALITA), serve as a signal peptide directing secretion. A propeptide spans 23-202 (APTSHVSNGF…SVFTSDLEMT (180 aa)) (removed in mature form). 2 N-linked (GlcNAc...) asparagine glycosylation sites follow: Asn210 and Asn281. The Peptidase S53 domain occupies 212 to 600 (TITPDCIREL…FEKLSKLVLI (389 aa)). Active-site charge relay system residues include Glu288 and Asp292. N-linked (GlcNAc...) asparagine glycosylation is found at Asn323 and Asn404. Ser504 serves as the catalytic Charge relay system. Residues Asp546, Ile547, Gly579, and Asp581 each contribute to the Ca(2+) site.

Requires Ca(2+) as cofactor.

It is found in the secreted. The protein resides in the extracellular space. The enzyme catalyses Release of an N-terminal tripeptide from a polypeptide.. Functionally, secreted tripeptidyl-peptidase which degrades proteins at acidic pHs and is involved in virulence. This Trichophyton verrucosum (strain HKI 0517) protein is Probable tripeptidyl-peptidase SED4 (SED4).